Here is a 386-residue protein sequence, read N- to C-terminus: Succinate--CoA ligase [ADP-forming] subunit beta (386 aa).

The ATP-grasp domain maps to 9–244; it reads KEILRKYGVP…HDEEDPLETR (236 aa). ATP-binding positions include Lys-46, 53-55, Glu-99, Cys-102, and Glu-107; that span reads GRG. 2 residues coordinate Mg(2+): Asn-199 and Asp-213. Substrate-binding positions include Asn-264 and 321–323; that span reads GIM.

It belongs to the succinate/malate CoA ligase beta subunit family. In terms of assembly, heterotetramer of two alpha and two beta subunits. The cofactor is Mg(2+).

It catalyses the reaction succinate + ATP + CoA = succinyl-CoA + ADP + phosphate. The enzyme catalyses GTP + succinate + CoA = succinyl-CoA + GDP + phosphate. The protein operates within carbohydrate metabolism; tricarboxylic acid cycle; succinate from succinyl-CoA (ligase route): step 1/1. Functionally, succinyl-CoA synthetase functions in the citric acid cycle (TCA), coupling the hydrolysis of succinyl-CoA to the synthesis of either ATP or GTP and thus represents the only step of substrate-level phosphorylation in the TCA. The beta subunit provides nucleotide specificity of the enzyme and binds the substrate succinate, while the binding sites for coenzyme A and phosphate are found in the alpha subunit. This chain is Succinate--CoA ligase [ADP-forming] subunit beta, found in Rickettsia rickettsii (strain Iowa).